Consider the following 223-residue polypeptide: Triosephosphate isomerase (223 aa).

6-8 (NLK) provides a ligand contact to substrate. Catalysis depends on His86, which acts as the Electrophile. Glu151 acts as the Proton acceptor in catalysis. Substrate is bound by residues Gly157 and Ser187.

It belongs to the triosephosphate isomerase family. Homodimer.

The protein resides in the cytoplasm. The enzyme catalyses D-glyceraldehyde 3-phosphate = dihydroxyacetone phosphate. It participates in carbohydrate biosynthesis; gluconeogenesis. The protein operates within carbohydrate degradation; glycolysis; D-glyceraldehyde 3-phosphate from glycerone phosphate: step 1/1. Functionally, involved in the gluconeogenesis. Catalyzes stereospecifically the conversion of dihydroxyacetone phosphate (DHAP) to D-glyceraldehyde-3-phosphate (G3P). In Campylobacter jejuni subsp. jejuni serotype O:2 (strain ATCC 700819 / NCTC 11168), this protein is Triosephosphate isomerase.